A 784-amino-acid polypeptide reads, in one-letter code: E3 UFM1-protein ligase 1 homolog (784 aa).

A compositionally biased stretch (basic and acidic residues) spans 398 to 414; it reads QEVDHGVMEEEKADKRE. The disordered stretch occupies residues 398–472; it reads QEVDHGVMEE…ASNKKGGKDP (75 aa).

It belongs to the UFL1 family.

E3 UFM1-protein ligase that mediates ufmylation of target proteins. The polypeptide is E3 UFM1-protein ligase 1 homolog (Anopheles gambiae (African malaria mosquito)).